Reading from the N-terminus, the 358-residue chain is Phospho-N-acetylmuramoyl-pentapeptide-transferase (358 aa).

Transmembrane regions (helical) follow at residues 28 to 48 (AALM…ITWL), 70 to 90 (TPTM…LLWA), 92 to 112 (LTNI…AVGF), 133 to 153 (MGGQ…NPDY), 165 to 185 (VTFD…VAAS), 196 to 216 (GLAI…IYIT), 233 to 253 (VGEV…FLWF), 260 to 280 (VFMG…LALL), 285 to 305 (LVLA…IVQV), and 335 to 355 (KIII…LSVL).

It belongs to the glycosyltransferase 4 family. MraY subfamily. Mg(2+) serves as cofactor.

The protein localises to the cell inner membrane. The enzyme catalyses UDP-N-acetyl-alpha-D-muramoyl-L-alanyl-gamma-D-glutamyl-meso-2,6-diaminopimeloyl-D-alanyl-D-alanine + di-trans,octa-cis-undecaprenyl phosphate = di-trans,octa-cis-undecaprenyl diphospho-N-acetyl-alpha-D-muramoyl-L-alanyl-D-glutamyl-meso-2,6-diaminopimeloyl-D-alanyl-D-alanine + UMP. It participates in cell wall biogenesis; peptidoglycan biosynthesis. Catalyzes the initial step of the lipid cycle reactions in the biosynthesis of the cell wall peptidoglycan: transfers peptidoglycan precursor phospho-MurNAc-pentapeptide from UDP-MurNAc-pentapeptide onto the lipid carrier undecaprenyl phosphate, yielding undecaprenyl-pyrophosphoryl-MurNAc-pentapeptide, known as lipid I. This chain is Phospho-N-acetylmuramoyl-pentapeptide-transferase, found in Desulfovibrio desulfuricans (strain ATCC 27774 / DSM 6949 / MB).